A 366-amino-acid chain; its full sequence is UPF0329 protein ECU01_0130/ECU01_1480/ECU08_0060 (366 aa).

The segment at 325–366 is disordered; it reads IRKEEKRIRKEEERAKNEEELLRMVESEEGKSGEGEEGCRRG.

This sequence belongs to the UPF0329 family.

The protein is UPF0329 protein ECU01_0130/ECU01_1480/ECU08_0060 of Encephalitozoon cuniculi (strain GB-M1) (Microsporidian parasite).